Consider the following 285-residue polypeptide: Acetylglutamate kinase (285 aa).

Residues 64–65, Arg86, and Asn181 each bind substrate; that span reads GG.

This sequence belongs to the acetylglutamate kinase family. ArgB subfamily.

It is found in the cytoplasm. The catalysed reaction is N-acetyl-L-glutamate + ATP = N-acetyl-L-glutamyl 5-phosphate + ADP. Its pathway is amino-acid biosynthesis; L-arginine biosynthesis; N(2)-acetyl-L-ornithine from L-glutamate: step 2/4. In terms of biological role, catalyzes the ATP-dependent phosphorylation of N-acetyl-L-glutamate. The protein is Acetylglutamate kinase of Clostridium beijerinckii (strain ATCC 51743 / NCIMB 8052) (Clostridium acetobutylicum).